The chain runs to 481 residues: Glutamyl-tRNA(Gln) amidotransferase subunit A (481 aa).

Catalysis depends on charge relay system residues lysine 76 and serine 151. Serine 175 acts as the Acyl-ester intermediate in catalysis.

Belongs to the amidase family. GatA subfamily. As to quaternary structure, heterotrimer of A, B and C subunits.

The catalysed reaction is L-glutamyl-tRNA(Gln) + L-glutamine + ATP + H2O = L-glutaminyl-tRNA(Gln) + L-glutamate + ADP + phosphate + H(+). Functionally, allows the formation of correctly charged Gln-tRNA(Gln) through the transamidation of misacylated Glu-tRNA(Gln) in organisms which lack glutaminyl-tRNA synthetase. The reaction takes place in the presence of glutamine and ATP through an activated gamma-phospho-Glu-tRNA(Gln). The polypeptide is Glutamyl-tRNA(Gln) amidotransferase subunit A (Neisseria meningitidis serogroup B (strain ATCC BAA-335 / MC58)).